The following is an 88-amino-acid chain: Apolipoprotein C-I (88 aa).

Residues 1–26 (MRLFISLPVLIVVLAMALEGPAPAQA) form the signal peptide.

Belongs to the apolipoprotein C1 family.

The protein resides in the secreted. Functionally, inhibitor of lipoprotein binding to the low density lipoprotein (LDL) receptor, LDL receptor-related protein, and very low density lipoprotein (VLDL) receptor. Associates with high density lipoproteins (HDL) and the triacylglycerol-rich lipoproteins in the plasma and makes up about 10% of the protein of the VLDL and 2% of that of HDL. Appears to interfere directly with fatty acid uptake and is also the major plasma inhibitor of cholesteryl ester transfer protein (CETP). Modulates the interaction of APOE with beta-migrating VLDL and inhibits binding of beta-VLDL to the LDL receptor-related protein. Binds free fatty acids and reduces their intracellular esterification. This is Apolipoprotein C-I (APOC1) from Myodes glareolus (Bank vole).